Reading from the N-terminus, the 493-residue chain is 1-aminocyclopropane-1-carboxylate synthase CMW33 (493 aa).

K279 carries the post-translational modification N6-(pyridoxal phosphate)lysine.

Belongs to the class-I pyridoxal-phosphate-dependent aminotransferase family. In terms of assembly, homodimer. It depends on pyridoxal 5'-phosphate as a cofactor.

It carries out the reaction S-adenosyl-L-methionine = 1-aminocyclopropane-1-carboxylate + S-methyl-5'-thioadenosine + H(+). Its pathway is alkene biosynthesis; ethylene biosynthesis via S-adenosyl-L-methionine; ethylene from S-adenosyl-L-methionine: step 1/2. Catalyzes the formation of 1-aminocyclopropane-1-carboxylate, a direct precursor of ethylene in higher plants. This chain is 1-aminocyclopropane-1-carboxylate synthase CMW33 (ACS1), found in Cucurbita maxima (Pumpkin).